Reading from the N-terminus, the 424-residue chain is Enolase (424 aa).

Gln-162 provides a ligand contact to (2R)-2-phosphoglycerate. Residue Glu-204 is the Proton donor of the active site. Residues Asp-241, Glu-284, and Asp-311 each contribute to the Mg(2+) site. The (2R)-2-phosphoglycerate site is built by Lys-336, Arg-365, Ser-366, and Lys-387. The active-site Proton acceptor is Lys-336.

Belongs to the enolase family. Mg(2+) serves as cofactor.

Its subcellular location is the cytoplasm. The protein resides in the secreted. It is found in the cell surface. It carries out the reaction (2R)-2-phosphoglycerate = phosphoenolpyruvate + H2O. It participates in carbohydrate degradation; glycolysis; pyruvate from D-glyceraldehyde 3-phosphate: step 4/5. Its function is as follows. Catalyzes the reversible conversion of 2-phosphoglycerate (2-PG) into phosphoenolpyruvate (PEP). It is essential for the degradation of carbohydrates via glycolysis. The chain is Enolase from Rhizobium meliloti (strain 1021) (Ensifer meliloti).